Consider the following 238-residue polypeptide: Ribonuclease 3 (238 aa).

Positions V8 to G135 constitute an RNase III domain. E48 provides a ligand contact to Mg(2+). D52 is a catalytic residue. The Mg(2+) site is built by D121 and E124. The active site involves E124. Residues D161 to G230 form the DRBM domain.

It belongs to the ribonuclease III family. Homodimer. The cofactor is Mg(2+).

Its subcellular location is the cytoplasm. The enzyme catalyses Endonucleolytic cleavage to 5'-phosphomonoester.. Functionally, digests double-stranded RNA. Involved in the processing of primary rRNA transcript to yield the immediate precursors to the large and small rRNAs (23S and 16S). Processes some mRNAs, and tRNAs when they are encoded in the rRNA operon. Processes pre-crRNA and tracrRNA of type II CRISPR loci if present in the organism. The protein is Ribonuclease 3 of Phenylobacterium zucineum (strain HLK1).